The following is a 154-amino-acid chain: Large-conductance mechanosensitive channel (154 aa).

The next 2 membrane-spanning stretches (helical) occupy residues 14–34 (VVDL…VNSL) and 86–106 (VFIN…FFVV).

The protein belongs to the MscL family. In terms of assembly, homopentamer.

The protein localises to the cell membrane. Channel that opens in response to stretch forces in the membrane lipid bilayer. May participate in the regulation of osmotic pressure changes within the cell. In Dehalococcoides mccartyi (strain ATCC BAA-2100 / JCM 16839 / KCTC 5957 / BAV1), this protein is Large-conductance mechanosensitive channel.